Reading from the N-terminus, the 303-residue chain is Foldase protein PrsA (303 aa).

Residues 1–20 (MMKKWLLAAASLLMVVTLAG) form the signal peptide. Cysteine 21 carries the N-palmitoyl cysteine lipid modification. A lipid anchor (S-diacylglycerol cysteine) is attached at cysteine 21. Positions 137–233 (EPKVEVQHIL…YGYHVIRMIK (97 aa)) constitute a PpiC domain.

This sequence belongs to the PrsA family.

It localises to the cell membrane. It catalyses the reaction [protein]-peptidylproline (omega=180) = [protein]-peptidylproline (omega=0). Its function is as follows. Plays a major role in protein secretion by helping the post-translocational extracellular folding of several secreted proteins. This Latilactobacillus sakei subsp. sakei (strain 23K) (Lactobacillus sakei subsp. sakei) protein is Foldase protein PrsA.